We begin with the raw amino-acid sequence, 526 residues long: MPASFLASLRAWIASSTIGQRILLALALGLLLITARVISKSKGTMPPGPRGLPLLGNIFQLPKLPWYRFTEWKEEFGPIFSLNFAGTPVVVLNSHEVVGDLLERKSTIYSDRPRFIMAGEILTGGMLIVFTGYGKVWRKLRRAGQEGLNVRASEKYQPLQESEARLLTTNMLREPAEWDAHLQRAAASSIASAVYAWPPLTKSDDGLVHRIDELMRRLVMAGLPGRYLVEIFPIMKHLPTWMAKWKREGLEWHRRDTEMFEGFYDNVARFMASGKYKPSLTAGLIERQEKNGLSKKEVSWLAGTMIGAGAETTAASLSVFMLAMTLYPDVMRKAQAEIDALVGRERMPTFADRPHLPYVCALVKEVLRWRPVGPVGVPRRTSEDDWYKGYFIPKGTLVIANVWAMNRDPAIYPDYDEFRPDRFLDASGNEIDIAGTHGQGHVTYGFGRRICIGMHVANQALFIDIAALLWAFNIEAPTGPDGNPILPSRTDFVDEGLVFRPAAFRCKVTPRIDDVATMLATLEKNA.

The next 3 membrane-spanning stretches (helical) occupy residues 13–33, 115–135, and 306–326; these read IASS…LLLI, FIMA…GYGK, and IGAG…AMTL. C451 provides a ligand contact to heme.

This sequence belongs to the cytochrome P450 family. Heme serves as cofactor.

The protein resides in the membrane. Its pathway is secondary metabolite biosynthesis. Its function is as follows. Cytochrome P450 monooxygenase that is able to use delta(6)-protoilludene as a substrate to produce delta(6)-protoilludene-8-ol. This Postia placenta (strain ATCC 44394 / Madison 698-R) (Brown rot fungus) protein is Cytochrome P450 monooxygenase 58.